Here is a 384-residue protein sequence, read N- to C-terminus: Probable endopolygalacturonase C (384 aa).

Residues 1–19 form the signal peptide; the sequence is MVRQLILISSLLAAVAVRA. A propeptide spanning residues 20–40 is cleaved from the precursor; it reads APADPAHPMVTEAPDVNLVEK. Cysteine 45 and cysteine 63 form a disulfide bridge. PbH1 repeat units follow at residues 176–207 and 208–229; these read STDLTMTDITVDNTDGDTDDLAANTDGFDIGE and STYITITGAEIYNQDDCVAINS. Catalysis depends on aspartate 222, which acts as the Proton donor. Cysteine 224 and cysteine 240 are oxidised to a cystine. Histidine 244 is a catalytic residue. PbH1 repeat units lie at residues 254-280 and 288-310; these read RDDNTVKNVTFYDVNVLKSQQAIRIKT and VSEVTYHEIAFSDATDYGIVIEQ. A glycan (N-linked (GlcNAc...) asparagine) is linked at asparagine 261. 2 disulfide bridges follow: cysteine 349-cysteine 354 and cysteine 373-cysteine 382.

The protein belongs to the glycosyl hydrolase 28 family.

The protein resides in the secreted. It carries out the reaction (1,4-alpha-D-galacturonosyl)n+m + H2O = (1,4-alpha-D-galacturonosyl)n + (1,4-alpha-D-galacturonosyl)m.. Its function is as follows. Involved in maceration and soft-rotting of plant tissue. Hydrolyzes the 1,4-alpha glycosidic bonds of de-esterified pectate in the smooth region of the plant cell wall. This Aspergillus niger (strain ATCC MYA-4892 / CBS 513.88 / FGSC A1513) protein is Probable endopolygalacturonase C (pgaC).